The sequence spans 264 residues: uncharacterized protein (264 aa).

The tract at residues 1–20 (MENIEKKCQPETINEDNNDE) is disordered.

It belongs to the mimivirus R73/L269/L862 family.

This is an uncharacterized protein from Acanthamoeba polyphaga mimivirus (APMV).